A 443-amino-acid polypeptide reads, in one-letter code: Trigger factor (443 aa).

Residues 163–248 enclose the PPIase FKBP-type domain; that stretch reads GDTAVIDFEG…INEIKAKELP (86 aa).

The protein belongs to the FKBP-type PPIase family. Tig subfamily.

The protein resides in the cytoplasm. It catalyses the reaction [protein]-peptidylproline (omega=180) = [protein]-peptidylproline (omega=0). Its function is as follows. Involved in protein export. Acts as a chaperone by maintaining the newly synthesized protein in an open conformation. Functions as a peptidyl-prolyl cis-trans isomerase. In Agathobacter rectalis (strain ATCC 33656 / DSM 3377 / JCM 17463 / KCTC 5835 / VPI 0990) (Eubacterium rectale), this protein is Trigger factor.